The chain runs to 79 residues: ATP synthase subunit c (79 aa).

The next 2 membrane-spanning stretches (helical) occupy residues 11-31 (MAAA…IGIL) and 53-73 (FFIV…LGLY).

This sequence belongs to the ATPase C chain family. F-type ATPases have 2 components, F(1) - the catalytic core - and F(0) - the membrane proton channel. F(1) has five subunits: alpha(3), beta(3), gamma(1), delta(1), epsilon(1). F(0) has three main subunits: a(1), b(2) and c(10-14). The alpha and beta chains form an alternating ring which encloses part of the gamma chain. F(1) is attached to F(0) by a central stalk formed by the gamma and epsilon chains, while a peripheral stalk is formed by the delta and b chains.

It is found in the cell inner membrane. Its function is as follows. F(1)F(0) ATP synthase produces ATP from ADP in the presence of a proton or sodium gradient. F-type ATPases consist of two structural domains, F(1) containing the extramembraneous catalytic core and F(0) containing the membrane proton channel, linked together by a central stalk and a peripheral stalk. During catalysis, ATP synthesis in the catalytic domain of F(1) is coupled via a rotary mechanism of the central stalk subunits to proton translocation. Key component of the F(0) channel; it plays a direct role in translocation across the membrane. A homomeric c-ring of between 10-14 subunits forms the central stalk rotor element with the F(1) delta and epsilon subunits. In Proteus mirabilis (strain HI4320), this protein is ATP synthase subunit c.